The sequence spans 465 residues: ATP synthase subunit beta (465 aa).

152 to 159 (GGAGVGKT) is a binding site for ATP.

This sequence belongs to the ATPase alpha/beta chains family. As to quaternary structure, F-type ATPases have 2 components, CF(1) - the catalytic core - and CF(0) - the membrane proton channel. CF(1) has five subunits: alpha(3), beta(3), gamma(1), delta(1), epsilon(1). CF(0) has three main subunits: a(1), b(2) and c(9-12). The alpha and beta chains form an alternating ring which encloses part of the gamma chain. CF(1) is attached to CF(0) by a central stalk formed by the gamma and epsilon chains, while a peripheral stalk is formed by the delta and b chains.

Its subcellular location is the cell membrane. It catalyses the reaction ATP + H2O + 4 H(+)(in) = ADP + phosphate + 5 H(+)(out). Produces ATP from ADP in the presence of a proton gradient across the membrane. The catalytic sites are hosted primarily by the beta subunits. This chain is ATP synthase subunit beta, found in Ruminiclostridium cellulolyticum (strain ATCC 35319 / DSM 5812 / JCM 6584 / H10) (Clostridium cellulolyticum).